We begin with the raw amino-acid sequence, 350 residues long: Phenylalanine--tRNA ligase alpha subunit (350 aa).

Glu271 is a binding site for Mg(2+).

Belongs to the class-II aminoacyl-tRNA synthetase family. Phe-tRNA synthetase alpha subunit type 1 subfamily. Tetramer of two alpha and two beta subunits. Mg(2+) is required as a cofactor.

Its subcellular location is the cytoplasm. The catalysed reaction is tRNA(Phe) + L-phenylalanine + ATP = L-phenylalanyl-tRNA(Phe) + AMP + diphosphate + H(+). In Acidovorax ebreus (strain TPSY) (Diaphorobacter sp. (strain TPSY)), this protein is Phenylalanine--tRNA ligase alpha subunit.